A 2656-amino-acid chain; its full sequence is 1-phosphatidylinositol 3-phosphate 5-kinase (2656 aa).

The segment at 24–159 is disordered; the sequence is FGTDDSQKDF…NSTNNDTSSN (136 aa). Low complexity-rich tracts occupy residues 59–107 and 124–159; these read NNNN…NNNN and SNTTNTNTNITTNTNITTNTNTNTNTNSTNNDTSSN. The FYVE-type zinc-finger motif lies at 198–255; the sequence is DHSSAVCYECSEEFTTFKRRHHCRLCGQIFCWKCSQKTLTDGKGERVRVCNFCYRRYM. Zn(2+) contacts are provided by cysteine 204, cysteine 207, cysteine 220, cysteine 223, cysteine 228, cysteine 231, cysteine 247, and cysteine 250. Polar residues predominate over residues 304-331; sequence NVSLGNSGDNSSFVQSPNNNFSQSPTFS. Disordered stretches follow at residues 304–383, 465–495, 517–570, 618–657, 670–823, 1115–1150, 1633–1659, 1710–1844, 2031–2127, 2179–2208, 2246–2304, and 2617–2656; these read NVSL…NNQQ, DHHQQQQQSNSHGSLSATPSNTPSGLISPIV, DNLD…SSSS, NNNDNGNDDNNNNNNDNNNNTTIEVDPRHSMPSKTSNTSF, TIGR…QQQP, SNSIQLQQQQNSNSPASLQNSTTTTNNNNNNNNNST, RSKRNVQQQQQQQQHQQSQQPQPQILI, VNNN…SSTP, QQQQ…SISP, NQQQQQQQQPSPIIIDEKDDRNTEKSSIIE, QQGD…SSNS, and NNNNNYNYNNFNNNNFNNNNNISNNGNGNINQRQVQQINK. Positions 332 to 355 are enriched in low complexity; the sequence is QQQQQQQQQQQQQQQQQQQQQQQQ. Polar residues-rich tracts occupy residues 356–371, 473–489, and 542–557; these read TTGVMSGLNPFSNSTL, SNSHGSLSATPSNTPSG, and SHSSANDLGTSNTVST. Low complexity-rich tracts occupy residues 558-570, 618-637, 674-730, 743-757, and 811-823; these read GESNSESKLSSSS, NNNDNGNDDNNNNNNDNNNN, NNNN…NLPN, QQQQQQQQQQQQPQP, and PSSSSNNQQQQQP. 2 stretches are compositionally biased toward low complexity: residues 1639-1656 and 1710-1746; these read QQQQQQQQHQQSQQPQPQ and VNNNNNNNNNNNNNNNNNNNNNNNNNNNNNNNNNNNN. Coiled-coil stretches lie at residues 1741–1823 and 2019–2061; these read NNNN…NNNN and KRIS…QQEQ. Residues 1750-1798 show a composition bias toward basic and acidic residues; sequence NKSENENENKNENKNENENENENKNENKNENENENKKENENQLEIKNEN. Low complexity-rich tracts occupy residues 1807–1833, 2031–2061, 2078–2107, and 2118–2127; these read NNNNNNNNNNNNNNNNNNNNNNNIDNN, QQQQQQDSQDLESSSQQQQQQQQQQQEQQEQ, SPSSLLKISSSSLPKDNNNSSENKPNSETN, and LSGSPISISP. The span at 2193 to 2202 shows a compositional bias: basic and acidic residues; sequence IDEKDDRNTE. Low complexity-rich tracts occupy residues 2252-2283 and 2618-2647; these read NNNNNNNNNNNNNNNNNNNNNNNNNNNTNNNN and NNNNYNYNNFNNNNFNNNNNISNNGNGNIN. The region spanning 2275-2596 is the PIPK domain; the sequence is NNNNTNNNNE…RFRDAMWLYF (322 aa).

The protein resides in the endosome membrane. The protein localises to the early endosome membrane. Its subcellular location is the cytoplasmic vesicle. It localises to the phagosome membrane. It is found in the late endosome membrane. It carries out the reaction a 1,2-diacyl-sn-glycero-3-phospho-(1D-myo-inositol-3-phosphate) + ATP = a 1,2-diacyl-sn-glycero-3-phospho-(1D-myo-inositol-3,5-bisphosphate) + ADP + H(+). It catalyses the reaction a 1,2-diacyl-sn-glycero-3-phospho-(1D-myo-inositol) + ATP = a 1,2-diacyl-sn-glycero-3-phospho-(1D-myo-inositol-5-phosphate) + ADP + H(+). The catalysed reaction is L-seryl-[protein] + ATP = O-phospho-L-seryl-[protein] + ADP + H(+). Its function is as follows. Dual specificity kinase part of the PI(3,5)P2 regulatory complex which regulates both the synthesis and turnover of phosphatidylinositol 3,5-bisphosphate (PtdIns(3,5)P2). Catalyzes the phosphorylation of phosphatidylinositol 3-phosphate on the fifth hydroxyl of the myo-inositol ring, to form phosphatidylinositol 3,5-bisphosphate. In Dictyostelium discoideum (Social amoeba), this protein is 1-phosphatidylinositol 3-phosphate 5-kinase (pip5k3).